The following is a 115-amino-acid chain: Phosphoribosyl-AMP cyclohydrolase (115 aa).

Asp-80 contacts Mg(2+). Cys-81 contributes to the Zn(2+) binding site. Residues Asp-82 and Asp-84 each coordinate Mg(2+). The Zn(2+) site is built by Cys-97 and Cys-104.

It belongs to the PRA-CH family. Homodimer. Mg(2+) is required as a cofactor. It depends on Zn(2+) as a cofactor.

Its subcellular location is the cytoplasm. The enzyme catalyses 1-(5-phospho-beta-D-ribosyl)-5'-AMP + H2O = 1-(5-phospho-beta-D-ribosyl)-5-[(5-phospho-beta-D-ribosylamino)methylideneamino]imidazole-4-carboxamide. Its pathway is amino-acid biosynthesis; L-histidine biosynthesis; L-histidine from 5-phospho-alpha-D-ribose 1-diphosphate: step 3/9. Catalyzes the hydrolysis of the adenine ring of phosphoribosyl-AMP. The protein is Phosphoribosyl-AMP cyclohydrolase of Mycobacterium sp. (strain MCS).